The sequence spans 112 residues: Evasin P1095 (112 aa).

The first 23 residues, 1 to 23 (MELNAFTILQIAVFIAVGYHANT), serve as a signal peptide directing secretion. 3 disulfide bridges follow: Cys-48/Cys-66, Cys-52/Cys-68, and Cys-62/Cys-79. N-linked (GlcNAc...) asparagine glycosylation is present at Asn-51. The interval 89 to 112 (GDPNDDPKINEATPQTQIFEKKRK) is disordered.

The protein localises to the secreted. In terms of biological role, salivary chemokine-binding protein which binds to host chemokine CXCL8. The protein is Evasin P1095 of Ixodes ricinus (Common tick).